A 227-amino-acid chain; its full sequence is MGLSFNGENMIIFGLFGKTGCGKTEILNELKKHHPVIDIEEIARTRGSILGDLYHLSMRSQEEFDYLINKEIEKAKKFGYAVVEYEGRKIGGEKKLKIPELLADIKNYTYKILIDCPYECQINRLVSIYKPKNEKEKEILINKFLILKESFKKPEMIEAVDNIIELIKQDKYYEAAKLIEEKLYREHYMRNVKKIKPDLIVYNEDVKKSAKIIDEFIKKKLKEHNLI.

ATP is bound at residue 17-24 (GKTGCGKT).

This is an uncharacterized protein from Methanocaldococcus jannaschii (strain ATCC 43067 / DSM 2661 / JAL-1 / JCM 10045 / NBRC 100440) (Methanococcus jannaschii).